Consider the following 316-residue polypeptide: Acetyl-coenzyme A carboxylase carboxyl transferase subunit alpha (316 aa).

The 255-residue stretch at 39 to 293 (RLQDKSHALT…RQTLLAQLES (255 aa)) folds into the CoA carboxyltransferase C-terminal domain.

Belongs to the AccA family. As to quaternary structure, acetyl-CoA carboxylase is a heterohexamer composed of biotin carboxyl carrier protein (AccB), biotin carboxylase (AccC) and two subunits each of ACCase subunit alpha (AccA) and ACCase subunit beta (AccD).

It is found in the cytoplasm. The enzyme catalyses N(6)-carboxybiotinyl-L-lysyl-[protein] + acetyl-CoA = N(6)-biotinyl-L-lysyl-[protein] + malonyl-CoA. It participates in lipid metabolism; malonyl-CoA biosynthesis; malonyl-CoA from acetyl-CoA: step 1/1. Its function is as follows. Component of the acetyl coenzyme A carboxylase (ACC) complex. First, biotin carboxylase catalyzes the carboxylation of biotin on its carrier protein (BCCP) and then the CO(2) group is transferred by the carboxyltransferase to acetyl-CoA to form malonyl-CoA. This chain is Acetyl-coenzyme A carboxylase carboxyl transferase subunit alpha, found in Azotobacter vinelandii (strain DJ / ATCC BAA-1303).